A 432-amino-acid polypeptide reads, in one-letter code: Serine/threonine-protein phosphatase 2A activator 1 (432 aa).

The tract at residues 322-432 (PYSKVEDEEP…MAPTKAPWAK (111 aa)) is disordered. The segment covering 366–389 (TVERLARRDGQRAAREKEEREDRA) has biased composition (basic and acidic residues). Over residues 396–412 (TTGAPGATALPPTRAPG) the composition is skewed to low complexity.

Belongs to the PTPA-type PPIase family.

It is found in the cytoplasm. The protein resides in the nucleus. It catalyses the reaction [protein]-peptidylproline (omega=180) = [protein]-peptidylproline (omega=0). In terms of biological role, PPIases accelerate the folding of proteins. It catalyzes the cis-trans isomerization of proline imidic peptide bonds in oligopeptides. Acts as a regulatory subunit for PP2A-like phosphatases modulating their activity or substrate specificity, probably by inducing a conformational change in the catalytic subunit, a direct target of the PPIase. Can reactivate inactive phosphatase PP2A-phosphatase methylesterase complexes (PP2Ai) in presence of ATP and Mg(2+) by dissociating the inactive form from the complex. The protein is Serine/threonine-protein phosphatase 2A activator 1 (RRD1) of Yarrowia lipolytica (strain CLIB 122 / E 150) (Yeast).